The primary structure comprises 344 residues: Protease HtpX homolog (344 aa).

Transmembrane regions (helical) follow at residues 8-28 (VALG…ATVA), 46-66 (ALTG…FVLV), and 74-94 (VSFL…TYVA). Residue His172 coordinates Zn(2+). Glu173 is an active-site residue. His176 provides a ligand contact to Zn(2+). The next 2 membrane-spanning stretches (helical) occupy residues 183-203 (AIML…VTAV) and 220-240 (LAVG…VLAF). Glu245 is a binding site for Zn(2+).

The protein belongs to the peptidase M48B family. The cofactor is Zn(2+).

It is found in the cell membrane. In Pyrobaculum calidifontis (strain DSM 21063 / JCM 11548 / VA1), this protein is Protease HtpX homolog.